Here is a 218-residue protein sequence, read N- to C-terminus: Mitochondrial fission factor (218 aa).

Topologically, residues 1-198 (MAEISRIQYE…ENKERAKREM (198 aa)) are cytoplasmic. Position 89 is a phosphothreonine (threonine 89). 4 positions are modified to phosphoserine: serine 129, serine 131, serine 146, and serine 171. Positions 167 to 198 (VDAASLRRQIIKLNRRLQLLEEENKERAKREM) form a coiled coil. Residues 199 to 216 (VMYSITVAFWLLNSWLWF) form a helical; Anchor for type IV membrane protein membrane-spanning segment. The Mitochondrial intermembrane portion of the chain corresponds to 217 to 218 (RR).

It belongs to the Tango11 family. As to quaternary structure, homodimer. Interacts with DNM1L. Interacts with C11orf65/MFI; the interaction inhibits MFF interaction with DNM1L.

The protein localises to the mitochondrion outer membrane. The protein resides in the peroxisome. It is found in the cytoplasmic vesicle. Its subcellular location is the secretory vesicle. It localises to the synaptic vesicle. Its function is as follows. Plays a role in mitochondrial and peroxisomal fission. Promotes the recruitment and association of the fission mediator dynamin-related protein 1 (DNM1L) to the mitochondrial surface. May be involved in regulation of synaptic vesicle membrane dynamics by recruitment of DNM1L to clathrin-containing vesicles. This is Mitochondrial fission factor (Mff) from Rattus norvegicus (Rat).